The following is a 289-amino-acid chain: Phosphatidylserine decarboxylase proenzyme (289 aa).

Residues Asp89, His146, and Ser252 each act as charge relay system; for autoendoproteolytic cleavage activity in the active site. The Schiff-base intermediate with substrate; via pyruvic acid; for decarboxylase activity role is filled by Ser252. Ser252 bears the Pyruvic acid (Ser); by autocatalysis mark.

Belongs to the phosphatidylserine decarboxylase family. PSD-B subfamily. Prokaryotic type I sub-subfamily. In terms of assembly, heterodimer of a large membrane-associated beta subunit and a small pyruvoyl-containing alpha subunit. The cofactor is pyruvate. In terms of processing, is synthesized initially as an inactive proenzyme. Formation of the active enzyme involves a self-maturation process in which the active site pyruvoyl group is generated from an internal serine residue via an autocatalytic post-translational modification. Two non-identical subunits are generated from the proenzyme in this reaction, and the pyruvate is formed at the N-terminus of the alpha chain, which is derived from the carboxyl end of the proenzyme. The autoendoproteolytic cleavage occurs by a canonical serine protease mechanism, in which the side chain hydroxyl group of the serine supplies its oxygen atom to form the C-terminus of the beta chain, while the remainder of the serine residue undergoes an oxidative deamination to produce ammonia and the pyruvoyl prosthetic group on the alpha chain. During this reaction, the Ser that is part of the protease active site of the proenzyme becomes the pyruvoyl prosthetic group, which constitutes an essential element of the active site of the mature decarboxylase.

The protein resides in the cell membrane. The catalysed reaction is a 1,2-diacyl-sn-glycero-3-phospho-L-serine + H(+) = a 1,2-diacyl-sn-glycero-3-phosphoethanolamine + CO2. Its pathway is phospholipid metabolism; phosphatidylethanolamine biosynthesis; phosphatidylethanolamine from CDP-diacylglycerol: step 2/2. Its function is as follows. Catalyzes the formation of phosphatidylethanolamine (PtdEtn) from phosphatidylserine (PtdSer). The polypeptide is Phosphatidylserine decarboxylase proenzyme (Shewanella putrefaciens (strain CN-32 / ATCC BAA-453)).